The following is a 222-amino-acid chain: UPF0502 protein XCV4380 (222 aa).

This sequence belongs to the UPF0502 family.

This chain is UPF0502 protein XCV4380, found in Xanthomonas euvesicatoria pv. vesicatoria (strain 85-10) (Xanthomonas campestris pv. vesicatoria).